A 58-amino-acid chain; its full sequence is Preprotein translocase subunit SecG (58 aa).

Residues 1–32 (MARKRRKGGEGLVTAIGLVRFYEEVEEKIKVP) lie on the Cytoplasmic side of the membrane. The chain crosses the membrane as a helical span at residues 33–54 (PEAVIGAAFALSIMTIALDLLL). Over 55–58 (KAAR) the chain is Extracellular.

Belongs to the SEC61-beta family. As to quaternary structure, component of the protein translocase complex. Heterotrimer consisting of alpha (SecY), beta (SecG) and gamma (SecE) subunits. Can form oligomers of the heterotrimer.

It localises to the cell membrane. Its function is as follows. Involved in protein export. The function of the beta subunit is unknown, but it may be involved in stabilization of the trimeric complex. This chain is Preprotein translocase subunit SecG, found in Ignicoccus hospitalis (strain KIN4/I / DSM 18386 / JCM 14125).